Consider the following 258-residue polypeptide: MAKRIDVSGLNAYYGSFLAIEDISMTVEPRSVTAFIGPSGCGKSTFLRTLNRMHEVTPGGRVDGKVMLDDENLYGAGIDPVAVRREVGMVFQRPNPFPTMSVYDNVAAGLRLNGKYKKSQLDDVVEKSLRGANLWNEVKDRLNKPGSGLSGGQQQRLCIARAIAVEPNVLLMDEPCSALDPISTLAIEDLIGELKERFTIVIVTHNMQQAARVSDRTAFFNLAAVGQPGKLIEIDETERIFSNPSVQATEDYISGRFG.

In terms of domain architecture, ABC transporter spans 5–247; that stretch reads IDVSGLNAYY…ERIFSNPSVQ (243 aa). Position 37–44 (37–44) interacts with ATP; sequence GPSGCGKS.

Belongs to the ABC transporter superfamily. Phosphate importer (TC 3.A.1.7) family. As to quaternary structure, the complex is composed of two ATP-binding proteins (PstB), two transmembrane proteins (PstC and PstA) and a solute-binding protein (PstS).

The protein resides in the cell membrane. It carries out the reaction phosphate(out) + ATP + H2O = ADP + 2 phosphate(in) + H(+). Part of the ABC transporter complex PstSACB involved in phosphate import. Responsible for energy coupling to the transport system. The chain is Phosphate import ATP-binding protein PstB from Streptomyces coelicolor (strain ATCC BAA-471 / A3(2) / M145).